Here is a 238-residue protein sequence, read N- to C-terminus: tRNA (guanine-N(7)-)-methyltransferase (238 aa).

Residues Glu68, Glu93, Asp120, and Asp143 each contribute to the S-adenosyl-L-methionine site. Residue Asp143 is part of the active site. Residues Lys147, Asp179, and 216-219 each bind substrate; that span reads TKFE.

The protein belongs to the class I-like SAM-binding methyltransferase superfamily. TrmB family.

The enzyme catalyses guanosine(46) in tRNA + S-adenosyl-L-methionine = N(7)-methylguanosine(46) in tRNA + S-adenosyl-L-homocysteine. Its pathway is tRNA modification; N(7)-methylguanine-tRNA biosynthesis. Catalyzes the formation of N(7)-methylguanine at position 46 (m7G46) in tRNA. This Shewanella baltica (strain OS195) protein is tRNA (guanine-N(7)-)-methyltransferase.